Reading from the N-terminus, the 393-residue chain is NAD(P)H-quinone oxidoreductase subunit H, chloroplastic (393 aa).

This sequence belongs to the complex I 49 kDa subunit family. In terms of assembly, NDH is composed of at least 16 different subunits, 5 of which are encoded in the nucleus.

It is found in the plastid. The protein localises to the chloroplast thylakoid membrane. It catalyses the reaction a plastoquinone + NADH + (n+1) H(+)(in) = a plastoquinol + NAD(+) + n H(+)(out). The enzyme catalyses a plastoquinone + NADPH + (n+1) H(+)(in) = a plastoquinol + NADP(+) + n H(+)(out). NDH shuttles electrons from NAD(P)H:plastoquinone, via FMN and iron-sulfur (Fe-S) centers, to quinones in the photosynthetic chain and possibly in a chloroplast respiratory chain. The immediate electron acceptor for the enzyme in this species is believed to be plastoquinone. Couples the redox reaction to proton translocation, and thus conserves the redox energy in a proton gradient. The polypeptide is NAD(P)H-quinone oxidoreductase subunit H, chloroplastic (Liriodendron tulipifera (Tuliptree)).